Consider the following 85-residue polypeptide: uncharacterized protein (85 aa).

Positions 17–53 form a coiled coil; that stretch reads KKRYEMLVQELLKEDDEEREKILAEELELLLDFLKKA.

This is an uncharacterized protein from Archaeoglobus fulgidus (strain ATCC 49558 / DSM 4304 / JCM 9628 / NBRC 100126 / VC-16).